Consider the following 247-residue polypeptide: D-alanyl-D-alanine dipeptidase (247 aa).

Residues His140 and Asp147 each coordinate Zn(2+). The Proton donor/acceptor role is filled by Glu215. His218 serves as a coordination point for Zn(2+).

It belongs to the peptidase M15D family. The cofactor is Zn(2+).

It localises to the cytoplasm. It catalyses the reaction D-alanyl-D-alanine + H2O = 2 D-alanine. Its function is as follows. Catalyzes hydrolysis of the D-alanyl-D-alanine dipeptide. May have a role in cell-wall turnover. In Synechocystis sp. (strain ATCC 27184 / PCC 6803 / Kazusa), this protein is D-alanyl-D-alanine dipeptidase.